A 369-amino-acid chain; its full sequence is Maltose/maltodextrin import ATP-binding protein MalK (369 aa).

Residues 4–234 (VTLHNVSKAY…PVNRFVASFI (231 aa)) enclose the ABC transporter domain. ATP is bound at residue 36 to 43 (GPSGCGKS).

This sequence belongs to the ABC transporter superfamily. Maltooligosaccharide importer (TC 3.A.1.1.1) family. As to quaternary structure, the complex is composed of two ATP-binding proteins (MalK), two transmembrane proteins (MalG and MalK) and a solute-binding protein (MalE).

The protein localises to the cell inner membrane. It carries out the reaction D-maltose(out) + ATP + H2O = D-maltose(in) + ADP + phosphate + H(+). Its function is as follows. Part of the ABC transporter complex MalEFGK involved in maltose/maltodextrin import. Responsible for energy coupling to the transport system. The chain is Maltose/maltodextrin import ATP-binding protein MalK from Photorhabdus laumondii subsp. laumondii (strain DSM 15139 / CIP 105565 / TT01) (Photorhabdus luminescens subsp. laumondii).